Consider the following 154-residue polypeptide: Interleukin-2 (154 aa).

Residues 1 to 20 (MYRMQLLSCIALSLALVTNS) form the signal peptide. T23 is a glycosylation site (O-linked (GalNAc...) threonine). Cysteines 78 and 126 form a disulfide.

This sequence belongs to the IL-2 family.

The protein resides in the secreted. Cytokine produced by activated CD4-positive helper T-cells and to a lesser extend activated CD8-positive T-cells and natural killer (NK) cells that plays pivotal roles in the immune response and tolerance. Binds to a receptor complex composed of either the high-affinity trimeric IL-2R (IL2RA/CD25, IL2RB/CD122 and IL2RG/CD132) or the low-affinity dimeric IL-2R (IL2RB and IL2RG). Interaction with the receptor leads to oligomerization and conformation changes in the IL-2R subunits resulting in downstream signaling starting with phosphorylation of JAK1 and JAK3. In turn, JAK1 and JAK3 phosphorylate the receptor to form a docking site leading to the phosphorylation of several substrates including STAT5. This process leads to activation of several pathways including STAT, phosphoinositide-3-kinase/PI3K and mitogen-activated protein kinase/MAPK pathways. Functions as a T-cell growth factor and can increase NK-cell cytolytic activity as well. Promotes strong proliferation of activated B-cells and subsequently immunoglobulin production. Plays a pivotal role in regulating the adaptive immune system by controlling the survival and proliferation of regulatory T-cells, which are required for the maintenance of immune tolerance. Moreover, participates in the differentiation and homeostasis of effector T-cell subsets, including Th1, Th2, Th17 as well as memory CD8-positive T-cells. The polypeptide is Interleukin-2 (IL2) (Macaca mulatta (Rhesus macaque)).